Consider the following 480-residue polypeptide: Adenylosuccinate synthetase, chloroplastic (480 aa).

The N-terminal 54 residues, 1–54, are a transit peptide targeting the chloroplast; it reads MATARVMVADRARAFGGTTATRARRDDQGRRVTIARGIPSRARVVVARASERAY. GTP-binding positions include 69–75 and 97–99; these read GDEGKGK and GHT. The active-site Proton acceptor is the Asp70. Residues Asp70 and Gly97 each coordinate Mg(2+). IMP-binding positions include 70–73, 95–98, Thr187, Arg201, Asn278, Thr293, and Arg357; these read DEGK and NAGH. His98 acts as the Proton donor in catalysis. A substrate-binding site is contributed by 353–359; sequence TTTGRPR. GTP contacts are provided by residues Arg359, 385–387, and 468–470; these read KLD and GVG.

The protein belongs to the adenylosuccinate synthetase family. As to quaternary structure, homodimer. Mg(2+) is required as a cofactor.

It localises to the plastid. Its subcellular location is the chloroplast. The catalysed reaction is IMP + L-aspartate + GTP = N(6)-(1,2-dicarboxyethyl)-AMP + GDP + phosphate + 2 H(+). It functions in the pathway purine metabolism; AMP biosynthesis via de novo pathway; AMP from IMP: step 1/2. Plays an important role in the de novo pathway and in the salvage pathway of purine nucleotide biosynthesis. Catalyzes the first committed step in the biosynthesis of AMP from IMP. In Ostreococcus tauri, this protein is Adenylosuccinate synthetase, chloroplastic.